Here is a 553-residue protein sequence, read N- to C-terminus: Copine-9 (553 aa).

2 C2 domains span residues 1–125 (MSLS…ERPL) and 132–255 (KCGT…FTVY). Aspartate 163, aspartate 169, aspartate 225, aspartate 227, and aspartate 233 together coordinate Ca(2+). Residues 299–500 (NFTVAIDFTA…VQFVPFRDYV (202 aa)) enclose the VWFA domain. Residues 531-553 (TRDIQPRPPPPVSPNPTPAPEQP) form a disordered region. The segment covering 536 to 553 (PRPPPPVSPNPTPAPEQP) has biased composition (pro residues).

This sequence belongs to the copine family. Ca(2+) serves as cofactor.

Probable calcium-dependent phospholipid-binding protein that may play a role in calcium-mediated intracellular processes. Plays a role in dendrite formation by melanocytes. This Mus musculus (Mouse) protein is Copine-9.